A 326-amino-acid polypeptide reads, in one-letter code: Fructose-1,6-bisphosphatase class 1 (326 aa).

Residues Glu90, Asp111, Leu113, and Asp114 each coordinate Mg(2+). Substrate-binding positions include 114–117 (DGSS), Tyr222, and Lys253. Position 259 (Glu259) interacts with Mg(2+).

The protein belongs to the FBPase class 1 family. Homotetramer. It depends on Mg(2+) as a cofactor.

It localises to the cytoplasm. The enzyme catalyses beta-D-fructose 1,6-bisphosphate + H2O = beta-D-fructose 6-phosphate + phosphate. It participates in carbohydrate biosynthesis; gluconeogenesis. The protein is Fructose-1,6-bisphosphatase class 1 of Citrifermentans bemidjiense (strain ATCC BAA-1014 / DSM 16622 / JCM 12645 / Bem) (Geobacter bemidjiensis).